The following is a 166-amino-acid chain: MALKTDIRGMIWRYPDYFIVGREQCREFARAVKCDHPAFFSEEAAADLGYDALVAPLTFVTILAKYVQLDFFRHVDVGMETMQIVQVDQRFVFHKPVLAGDKLWARMDIHSVDERFGADIVVTRNLCTNDDGELVMEAYTTLMGQQGDGSARLKWDKESGQVIRTA.

It belongs to the UPF0336 family.

This Mycobacterium bovis (strain ATCC BAA-935 / AF2122/97) protein is UPF0336 protein Mb0656.